A 373-amino-acid polypeptide reads, in one-letter code: ORC1-type DNA replication protein 2 (373 aa).

ATP is bound by residues 63–67 (TGKTS), tyrosine 205, and arginine 217.

Belongs to the CDC6/cdc18 family.

In terms of biological role, involved in regulation of DNA replication. The protein is ORC1-type DNA replication protein 2 (cdc6-2) of Methanosarcina acetivorans (strain ATCC 35395 / DSM 2834 / JCM 12185 / C2A).